A 426-amino-acid chain; its full sequence is Actin-like protein 6B (426 aa).

The tract at residues threonine 39–methionine 82 is essential for mediating its function in dendritic development; may contribute to neuronal-specific targeting.

It belongs to the actin family. In terms of assembly, component of the multiprotein chromatin-remodeling complexes SWI/SNF: SWI/SNF-A (BAF), SWI/SNF-B (PBAF) and related complexes. The canonical complex contains a catalytic subunit (either SMARCA4/BRG1/BAF190A or SMARCA2/BRM/BAF190B) and at least SMARCE1, ACTL6A/BAF53, SMARCC1/BAF155, SMARCC2/BAF170, and SMARCB1/SNF5/BAF47. Other subunits specific to each of the complexes may also be present permitting several possible combinations developmentally and tissue specific. Component of the BAF complex, which includes at least actin (ACTB), ARID1A/BAF250A, ARID1B/BAF250B, SMARCA2/BRM, SMARCA4/BRG1/BAF190A, ACTL6A/BAF53, ACTL6B/BAF53B, SMARCE1/BAF57, SMARCC1/BAF155, SMARCC2/BAF170, SMARCB1/SNF5/INI1, and one or more SMARCD1/BAF60A, SMARCD2/BAF60B, or SMARCD3/BAF60C. Component of neuron-specific chromatin remodeling complex (nBAF complex) composed of at least, ARID1A/BAF250A or ARID1B/BAF250B, SMARCD1/BAF60A or SMARCD2/BAF60B or SMARCD3/BAF60C, SMARCA2/BRM/BAF190B, SMARCA4/BRG1/BAF190A, SMARCB1/BAF47, SMARCC1/BAF155, SMARCE1/BAF57, SMARCC2/BAF170, DPF1/BAF45B, DPF3/BAF45C, ACTL6B/BAF53B and actin (ACTB). Note that the nBAF complex is polymorphic in regard to the ATPase, SMARCA2 and SMARCA4 occupying mutually exclusive positions. May be a component of the SWI/SNF-B (PBAF) chromatin remodeling complex, at least composed of SMARCA4/BRG1, SMARCB1/BAF47/SNF5, ACTL6A/BAF53A or ACTL6B/BAF53B, SMARCE1/BAF57, SMARCD1/BAF60A, SMARCD2/BAF60B, perhaps SMARCD3/BAF60C, SMARCC1/BAF155, SMARCC2/BAF170, PBRM1/BAF180, ARID2/BAF200 and actin.

It localises to the nucleus. Its function is as follows. Involved in transcriptional activation and repression of select genes by chromatin remodeling (alteration of DNA-nucleosome topology). Component of SWI/SNF chromatin remodeling complexes that carry out key enzymatic activities, changing chromatin structure by altering DNA-histone contacts within a nucleosome in an ATP-dependent manner. Belongs to the neuron-specific chromatin remodeling complex (nBAF complex), as such plays a role in remodeling mononucleosomes in an ATP-dependent fashion, and is required for postmitotic neural development and dendritic outgrowth. During neural development a switch from a stem/progenitor to a postmitotic chromatin remodeling mechanism occurs as neurons exit the cell cycle and become committed to their adult state. The transition from proliferating neural stem/progenitor cells to postmitotic neurons requires a switch in subunit composition of the npBAF and nBAF complexes. As neural progenitors exit mitosis and differentiate into neurons, npBAF complexes which contain ACTL6A/BAF53A and PHF10/BAF45A, are exchanged for homologous alternative ACTL6B/BAF53B and DPF1/BAF45B or DPF3/BAF45C subunits in neuron-specific complexes (nBAF). The npBAF complex is essential for the self-renewal/proliferative capacity of the multipotent neural stem cells. The nBAF complex along with CREST plays a role regulating the activity of genes essential for dendrite growth. ACTL6B/BAF53B is not essential for assembly of the nBAF complex but is required for targeting the complex and CREST to the promoter of genes essential for dendritic growth. Essential for neuronal maturation and dendrite development. This Bos taurus (Bovine) protein is Actin-like protein 6B (ACTL6B).